The chain runs to 213 residues: Uridine kinase (213 aa).

15-22 contributes to the ATP binding site; the sequence is GASASGKS.

It belongs to the uridine kinase family.

Its subcellular location is the cytoplasm. The enzyme catalyses uridine + ATP = UMP + ADP + H(+). It catalyses the reaction cytidine + ATP = CMP + ADP + H(+). The protein operates within pyrimidine metabolism; CTP biosynthesis via salvage pathway; CTP from cytidine: step 1/3. Its pathway is pyrimidine metabolism; UMP biosynthesis via salvage pathway; UMP from uridine: step 1/1. The chain is Uridine kinase from Salmonella paratyphi A (strain ATCC 9150 / SARB42).